The following is a 653-amino-acid chain: MGHGTNRVEDMASPNNGTAGETVVEIHSVCLPPKKTAFQKLKKRVGDVFFPDDPLQRFRNQTWRNRVILGLQSLFPIFTWGSQYDLKLLRSDVISGLTIASLAIPQGISYAKLANLPPIVGLYSSFVPPLIYAVLGSSRHLAVGPVSIASLVMGSMLSESVSPTQDSILYLKLAFTSTFFAGVFQASLGLLRLGFMIDFLSKATLIGFTAGAAVIVSLQQLKGLLGIVHFTGKMQIVPVMSSVFNHRSEWSWETIVMGIGFLSILLTTRHISMRKPKLFWISAASPLASVIISTLLVYLIRSKTHAISFIGHLPKGLNPPSLNMLYFSGAHLALAIKTGIITGILSLTEGIAVGRTFASLKNYQVNGNKEMMAIGFMNMAGSCTSCYVTTGSFSRSAVNYNAGAKTAVSNIVMASAVLVTLLFLMPLFYYTPNVILAAIILTAVIGLIDYQAAYKLWKVDKFDFFTCLCSFFGVLFVSVPLGLAIAVAVSVIKILLHVTRPNTSEFGNIPGTQIYQSLGRYREASRIPGFLILAIESPIYFANSTYLQDRILRWAREEENRIKENNGTTLKCIILDMTAVSAIDTSGLEAVFELRRRLEKQSLQLVLVNPVGTVMEKLHKSKIIEALGLSGLYLTVGEAVADLSSTWKANGQP.

Residues Met-1–Asp-92 lie on the Cytoplasmic side of the membrane. Residues Val-93–Leu-113 form a helical membrane-spanning segment. The Extracellular segment spans residues Ala-114–Asn-115. A helical transmembrane segment spans residues Leu-116–Gly-136. Over Ser-137–His-140 the chain is Cytoplasmic. The chain crosses the membrane as a helical span at residues Leu-141 to Val-161. At Ser-162 to Ser-167 the chain is on the extracellular side. The helical transmembrane segment at Ile-168 to Leu-188 threads the bilayer. Residues Gly-189–Gly-194 are Cytoplasmic-facing. The helical transmembrane segment at Phe-195–Ile-215 threads the bilayer. The Extracellular segment spans residues Val-216–Arg-247. Residues Ser-248–Thr-268 form a helical membrane-spanning segment. Residues Arg-269–Phe-279 are Cytoplasmic-facing. Residues Trp-280–Ile-300 traverse the membrane as a helical segment. Residues Arg-301 to His-331 lie on the Extracellular side of the membrane. A helical membrane pass occupies residues Leu-332 to Ala-352. At Val-353–Glu-370 the chain is on the cytoplasmic side. A helical membrane pass occupies residues Met-371 to Gly-391. Topologically, residues Ser-392 to Ala-407 are extracellular. The chain crosses the membrane as a helical span at residues Val-408–Phe-428. The Cytoplasmic portion of the chain corresponds to Tyr-429 to Asn-433. Residues Val-434–Tyr-454 traverse the membrane as a helical segment. At Lys-455–Phe-471 the chain is on the extracellular side. A helical transmembrane segment spans residues Phe-472–Ile-492. The Cytoplasmic portion of the chain corresponds to Lys-493–Pro-653. Residues Arg-520–Leu-643 form the STAS domain.

Belongs to the SLC26A/SulP transporter (TC 2.A.53) family.

The protein localises to the membrane. Its function is as follows. H(+)/sulfate cotransporter that may play a role in the regulation of sulfate assimilation. The chain is Probable sulfate transporter 3.4 (SULTR3;4) from Arabidopsis thaliana (Mouse-ear cress).